The sequence spans 374 residues: MSLLLDNLQYTIPTFLFLLTLLVFVHEMGHYLVGRWSGIRILAFSVGFGPELFGWTDRHGTRWKFCAVPLGGYVKFFGDEDAASTPDYRRLETIAPEERGRTFLGAKLWKRAATVAAGPIANFLLAIAIFAVLFSIYGRAVADPVVAFVAPDSAAEKAGVLPGDRLLSIDGKPIATFDDVRRYVSVRPELPITVRIEREGAAIDLPMVPQRTESVDPLGNKMEEGKIGIGTNQEAGNFRVETYGPLEAVGQGALQSWRIVTGTLDYLSNLFVGRMSADQVGGPIRIAQMSGQMAKLGIAEVLNFAAVLSVSIGLLNLMPVPVLDGGHLMFYAVEALRGRPVGPAAQDLAFRIGFAMVLMLTVFAAWNDINWLFG.

Residue His26 coordinates Zn(2+). Glu27 is an active-site residue. Residue His30 coordinates Zn(2+). 4 consecutive transmembrane segments (helical) span residues 36-55 (WSGI…LFGW), 112-134 (AATV…AVLF), 301-323 (VLNF…VPVL), and 348-367 (LAFR…AAWN). Residues 126-199 (AIAIFAVLFS…LPITVRIERE (74 aa)) enclose the PDZ domain.

It belongs to the peptidase M50B family. Requires Zn(2+) as cofactor.

Its subcellular location is the cell inner membrane. The protein is Putative zinc metalloprotease R01501 of Rhizobium meliloti (strain 1021) (Ensifer meliloti).